The following is a 160-amino-acid chain: Small ribosomal subunit protein uS7 (160 aa).

Belongs to the universal ribosomal protein uS7 family. Part of the 30S ribosomal subunit. Contacts proteins S9 and S11.

In terms of biological role, one of the primary rRNA binding proteins, it binds directly to 16S rRNA where it nucleates assembly of the head domain of the 30S subunit. Is located at the subunit interface close to the decoding center, probably blocks exit of the E-site tRNA. The polypeptide is Small ribosomal subunit protein uS7 (Ehrlichia canis (strain Jake)).